The following is a 404-amino-acid chain: Glucose-1-phosphate adenylyltransferase (404 aa).

Alpha-D-glucose 1-phosphate is bound by residues Y99, G164, 179–180, and S197; that span reads EK.

Belongs to the bacterial/plant glucose-1-phosphate adenylyltransferase family.

The enzyme catalyses alpha-D-glucose 1-phosphate + ATP + H(+) = ADP-alpha-D-glucose + diphosphate. It participates in capsule biogenesis; capsule polysaccharide biosynthesis. Its pathway is glycan biosynthesis; glycogen biosynthesis. Functionally, involved in the biosynthesis of ADP-glucose, a building block, required in the biosynthesis of maltose-1-phosphate (M1P) and in the elongation reactions to produce linear alpha-1,4-glucans. Catalyzes the reaction between ATP and alpha-D-glucose 1-phosphate (G1P) to produce pyrophosphate and ADP-Glc. The polypeptide is Glucose-1-phosphate adenylyltransferase (Mycobacterium bovis (strain ATCC BAA-935 / AF2122/97)).